The following is a 404-amino-acid chain: NADH-quinone oxidoreductase subunit D 2 (404 aa).

It belongs to the complex I 49 kDa subunit family. As to quaternary structure, NDH-1 is composed of 14 different subunits. Subunits NuoB, C, D, E, F, and G constitute the peripheral sector of the complex.

The protein localises to the cell inner membrane. It catalyses the reaction a quinone + NADH + 5 H(+)(in) = a quinol + NAD(+) + 4 H(+)(out). Its function is as follows. NDH-1 shuttles electrons from NADH, via FMN and iron-sulfur (Fe-S) centers, to quinones in the respiratory chain. The immediate electron acceptor for the enzyme in this species is believed to be ubiquinone. Couples the redox reaction to proton translocation (for every two electrons transferred, four hydrogen ions are translocated across the cytoplasmic membrane), and thus conserves the redox energy in a proton gradient. The chain is NADH-quinone oxidoreductase subunit D 2 from Rhizobium meliloti (strain 1021) (Ensifer meliloti).